We begin with the raw amino-acid sequence, 5100 residues long: MTPGAQLLPLLVAISTAVAAVVTSDAPTKTLSPATGDATLAFVFDVTGSMWDDLMQVIDGASRILERSLSSRSRVIANYALVPFHDPDIGPVTLTADPVVFQRELRELYVQGGGDCPEMSVGAIKAAVEVANPGSFIYVFSDARAKDYHKKKELLQLLQLKQSQVVFVLTGDCGDRTHPGYLVFEEIASTSSGQVFQLDKQQVSEVLKWVESAIQASKVHLLSADHEEEGEHTWRIPFDPSLKEVTIALSGPGPEIEVRDPLGRVLQTDEGLNVLLNIPDSAKVVAFKPEHPGLWAIKVYSSGRHSVRISGISNINFRAGFSMQPSLDLNHTIEWPLQGVPISLVINSTGLQAPGHLESVELSHSSGRSLLTLPTQLLSNGSTHQLWAGPPFHVPKERFYLKVKGKDHEGNPLLRVSGVSYSAVAPGVPLVSMAPKIHGYLQQPLLVSCSVYSTLPFQLQLQRDGERLGEERYFQESGNSSWEIPRASKAEEGTYQCIAVSRAGSGRASAQIVITDPPPQLVPGPNVTVSPGETAILSCQVLGETPYNLTWVRDWRALPATTGRISQLSDLSLEVRSIIPTDGGQYQCVASNPNGVTRATTWLLVREAPQVSINARSQRFSQGVEVRVSCSASGYPTPHISWSREGLALPEDSRIHVDAQGTLIIQGLAPEDAGNYSCQATNEVGTDEETVTLYYTDPPSVSAVNAVVLTAVGEEAVLLCAASGVPPPRVIWYRGGLEVILAPGDSRSGTLRIPEAQERDAGLYTCKAVNELGDASAEIQLVVGNAPRLTDPPQDVTVELGKSVFLTCRATGRPPPIVTWRRGDGQALEPGRGSRTGQRDSGVLVFERVSLEDQAPYVCEARNVFGKAQAEARLVVTGHAPPQIANSASVVRVLEGQPVSLTCVILAGRPLPERRWLKAGSPLPPGNRHAVRADGSLHLDRALQEDAGRYSCVATNVAGSQHRDVELVVQVPPRIHPTSTHHVTNEGVPASLPCIASGVPTPKITWTKETNALTTSGHYSVSRNGTLVIVQPSPQDAGAYVCTATNSVGFSSQEMWLSVNTKPMIKMNGSQAVDVPLRVTVKAGEEVTLDCEAQGSPTPLLTWTKDANPLLPVTNRYELLPSGSLRLAQAQVGDNGLYGCTASNPAGATSRRYVLRVQVPPQVQPGPRVLKVLAGEALDLNCVAEGNPQPQLNWFKDGMALMGEGAQGSVHFAAVKTSDAGLYRCEASNSAGTDTWKLELLVLEPPHWGTDETKSLLERVAGENASLPCPAQGTPKPRITWRRGPSSEPLNGRPDVAVLDEGSLFLSSVSLADSGEYECQATNEVGSASRRAKLVVYVPPSIREEGHITNVSGLAGQPLTLECDINGFPAPEVAWLKDGQLVGDSGGGWDGEEASGHRLLDGSRSLHFPRIQESHSGLYSCQAENQAGSAQRDFNLAVFIPPSLLGAGAAQEVLGLAGADVTLECQTSGVPTPQVEWTKDGQPILPGDPHILLQEDGQVLRIISSHLGDEGQYQCVAFSPAGQQAKDFQLSIHSPPTIWGSNETGEVTVLEGHTAQLLCEARGMPSPAITWYKDGTLLAPSSEVVYSKGGRQLQLVKAQPSDAGLYTCQASNPAGITKKSTSLEVYVPPTIEGADGGPYLVQAVAGRPVALECVARGHPPPTISWQHEGLPVVDSNGTWLEAGGALQLENPGEASGGLYSCVASSPAGEAVLQYSVEMQVPPQLLVAEGMGQVTATVGQSLDLPCQASGSPVPTIQWLQNGRPAEELAGVQLASQGTILHISHVELNHSGLFACQATNEAGTAGAEVEVSVHGKQVSVNLGASFSAHHWWGEPHSPFPATCNPPVCRHWSAYPKPSLVERWRGRGNLRGQPSGTVREPGLTLLSQIEKADLRDEGVYTCSATNLAGESKKDVTLKVLVPPNIEPGPVNKVVLENASVTLECLASGVPPPDVSWFKGRQPISTQRRVIVSADGRVLHIERVQLSDAGSYRCVATNVAGSAGLKYGLRVNVPPRITLPPNLPGPVLLGTPFRLTCNATGTPRPTLIWLKDGNPVSPEGIPGLKVFPGGQVLTVASARASDSGSYSCVAVSAVGEDRRDVILQVHMPPSILGEELNMSVVVNESVTLECQSHAVPPPVLRWQKDGRPLEPHPGIRLSADKALLEVDRAAVWDAGHYTCEAINQAGRSEKHFNLHVWVPPAFPSKEPYTLTVTEGQTARLSCDCQGIPFPKISWRKDGQPLPGEGDSLEQVLAVGRLLYLGQAQSAQEGTYTCECSNAAGTSSQEQSLEVLVPPQVTGLWEPLTTVSVIQDGNTTLACNATGKPLPVVTWQRDGQPVSVEPGLRLQNQNHSLHVERAQASHAGGYSCVAENTAGRAERRFALSVLAPPHLTGDSDSLTNVTATLHGSFTLLCEAAGVPAPTVQWFQEGQPISPREGTYLLAGGWMLKMTQAQEQDRGLYSCLASNEAGEARRNFSVEVLVPPSIENEDLEEVIKVPEGQTAQLECNATGHPPPKVTWFKDGQSLTVEDPYEMSPDGAFLWIPQANLSNAGHYSCIASNAVGEKTKHTQLSVLVVPTILGVPEKNANEEVTVTINNPISLICEALAFPSPNITWMKDGSPFEASKNIQLLPGTHGLQILNAQKEDAGQYTCVVTNELGEATKNYHVEVLIPPSISKDDPLGEVSVKEVKTKVNSSLTLECECWATPPPSISWYKDGRPVTPSHRLSVLGEGRLLQIQPTQVSDSGRYLCVATNVAGEDDQDFNVLIQVPPMFQKMGDVDAGFEPLPHEEEAQGRVTEYREIVENNPAYLYCDTNAIPPPELTWYREGQPLSAADGVSVLQGGRILQLPLVQAEDAGRYSCKAANEVGEDWLHYELLVLTPPVIPGDTQELVEEVTVNASSAVSLECPALGNPAPAVSWFQNGLPVSPSPRLQVLEEGQVLKVATAEVADAASYMCVAENQAGSAEKLFTLKVQVPPQISDWTTSQLTATLNSSVSLPCEVYAHPNPEVTWYKDGQPLSLGQEAFLLPGTHTLRLARAQPADSGTYLCEALNAAGRDQKMVQLNVLVPPSFKQAPGGPQEAIQVRAGDKAILSCETDSLPEPAVTWFKDQQPLALGQRIQGLQGGQTLEILDSQASDKGVYSCKVSNTAGEAIRTFVLAIQVPPTFEKPERETVNQVAGRTLVLACDVSGIPAPTVTWLKDRLPVESSVVHGVVSRGGRLQLSHLQPAQAGTYTCVAENAQAEARKDFVVSVLVPPQIQDSGMAQEHNVLEKQEIRLHCEAEGQPPPDITWLKDGGLLDQHVGPHLRFYLDGSTLVLKGLRTADSGAYTCVAHNPAGEDARLHTVNVLVPPTIKQQAGDTGTLVSRTGELVTMVCPVQGSPPIHVSWLKDGLPLPLSQRTLLHSSGRTLRISQVQLADSGVFTCVAASPAGVADRNFTLLVLVPPILEPVEFQNNVMAAQGSEVVLPCEARGSPLPLVSWMKDGEPLLPQSLEQGPGLKLESVSVGDAGTYSCTAASEAGEARRHFQLTVMDPPHIEESGETSELSLTPGAHLELLCEARGIPPPNITWHKDGQALRRTENDSQAGRVLRVDNAGLYTCLAESPAGEVEKSFRVRVQAPPNVVGPRGPRSVVGLAPGQLILECSVEAEPAPEIEWHRGGVLLQADAHTHFPEQGRFLKLQALSTADGGDYSCTARNRAGSTSVAFRVEIHTAPTIQSGPNTVNVSVNRTTLLPCQTHGVPTPLVSWRKDGIPLHPGSPRLEFLPEGSLRIHPVLAQDAGHYLCLASNSAGSDRKGLDLRVFEPPAIAPGPSNLTLTAYSPASLPCEARGSPKPLVTWWKDGQKLDLRLQQGAYRLLPSNALFLTAPSPQDSAQFECVVSNEVGESRRRYQVTVHVPPTIADDQTHFTVTRMAPVILTCHSTGSPTPAVSWSKAGTQLGARGSGYRILPSGALEIERALPLHAGRYTCTARNSAGVARKHMVLTVQASPVVKPLPSVVQVVASEEVLLPCEASGIPQPMVIWQKEGLSIPEGAHMQVLPSGQLRIMHASPEDAGNYFCIAQNSVGSAMAKTRLVVQVPPVIENGLPDLSTIEGSHALLPCTAKGSPEPAITWEKDGHLVSGAEGKFTLQPSGELLVKNSEGQDAGTYICTAENAVGRARRRVHLTILTLPVLTTLPGDRSLRLGDRLWLRCVARGSPTPRIGWTINDQPVTEGVSEQDGGSTLQRAAVTREDSGTYTCWAENRVGRVQAVSFVHVKEAPVLQGEAFSYLVEPVGGSIQLHCVVRGDPAPDIHWTKDGLPLPISRLHFQLQNGSLTILRTKMDDAGRYQCLAVNEMGTVKKVVTVVLQSAPVFQVEPQDVTVRSGVDVELRCRATGEPVPTIEWLRAGRPLQAGRKLRALPDGSLWLEHVEAGDAGVYECVAHNHLGSVTAKALLAVRGEPRGSRGSMTGVINGQEFGMATLNISVLQQGSSEAPTIWSSISQVPASVGPLMRVLVVTIAPIYWALARESGEALNGYSLTGGSFQQESQMEFSTGELLTMTQVARGLDPDGLLLVDMKINGMIPESLADGDLRVQDFQEHYVQTGPGQLFAGSTQRFLHDSLPASLRCNHSIQYDETRGLQPQLVQHLRASSISSAFDPEAEALNFQLTTALQTEENEVGCPEGFEPDVQGAFCVDKDECSGGPSPCSHTCRNAPGHFSCSCPTGFSLAWDHRNCRDVDECAGNTHLCQEEQRCVNLLGSYNCLASCRPGFRVTADGSNCEDVDECLEQLDECHYNQLCENTPGGHHCGCPRGYRQQGHSLPCLDINECLQLPTPCVYQCQNLQGSYRCLCPPGQTLLRDGRTCIPLERNRQNITIVSHRSPFGPWLRSRVPRPSSSYHTWVSLRPGSGALNSVGRAWCPPGFIRQDGVCADLDECRVRSLCQHACQNTEGSYYCLCPSGYRLLPSGKNCQDINECEEDGIECGPGQMCFNTRGSFQCVDTPCPTTYRQGSSPGTCFRRCSQDCSASGPSTLQYRLLPLPLGVRAHHDVARLAAFSEAGIPANRTELTVLEPDPRSPFALRQLRAGQGAVYTRRALTRAGLYRLTVRAAAPRHQSVYILLIAVSPYPY.

A signal peptide spans 1–19 (MTPGAQLLPLLVAISTAVA). In terms of domain architecture, VWFA spans 37 to 211 (DATLAFVFDV…QVSEVLKWVE (175 aa)). 7 N-linked (GlcNAc...) asparagine glycosylation sites follow: Asn-330, Asn-347, Asn-380, Asn-479, Asn-526, Asn-548, and Asn-675. 43 Ig-like C2-type domains span residues 426 to 515 (PGVP…IVIT), 517 to 601 (PPPQ…RATT), 609 to 692 (PQVS…ETVT), 699 to 782 (PSVS…IQLV), 787 to 877 (PRLT…LVVT), 882 to 968 (PQIA…VELV), 973 to 1058 (PRIH…MWLS), 1063 to 1156 (PMIK…YVLR), 1161 to 1239 (PQVQ…WKLE), 1246 to 1335 (PHWG…AKLV), 1340 to 1437 (PSIR…FNLA), 1442 to 1531 (PSLL…FQLS), 1536 to 1624 (PTIW…TSLE), 1629 to 1717 (PTIE…YSVE), 1722 to 1810 (PQLL…VEVS), 1825 to 1913 (SAHH…KDVT), 1920 to 2008 (PNIE…LRVN), 2011 to 2100 (PRIT…VILQ), 2105 to 2189 (PSIL…KHFN), 2196 to 2285 (PAFP…QSLE), 2290 to 2379 (PQVT…FALS), 2384 to 2473 (PHLT…FSVE), 2478 to 2566 (PSIE…TQLS), 2571 to 2662 (PTIL…YHVE), 2667 to 2758 (PSIS…QDFN), 2781 to 2871 (PHEE…YELL), 2875 to 2964 (PPVI…KLFT), 2971 to 3058 (PQIS…VQLN), 3063 to 3153 (PSFK…FVLA), 3157 to 3245 (PPTF…FVVS), 3250 to 3340 (PQIQ…HTVN), 3345 to 3432 (PTIK…RNFT), 3438 to 3523 (PPIL…FQLT), 3528 to 3609 (PHIE…FRVR), 3614 to 3702 (PNVV…FRVE), 3707 to 3793 (PTIQ…LDLR), 3798 to 3886 (PAIA…YQVT), 3891 to 3977 (PTIA…MVLT), 3982 to 4067 (PVVK…TRLV), 4071 to 4158 (PPVI…VHLT), 4163 to 4244 (PVLT…QAVS), 4252 to 4336 (PVLQ…KVVT), and 4343 to 4428 (PVFQ…ALLA). An intrachain disulfide couples Cys-449 to Cys-497. 6 disulfides stabilise this stretch: Cys-539/Cys-588, Cys-630/Cys-678, Cys-720/Cys-766, Cys-808/Cys-859, Cys-903/Cys-952, and Cys-994/Cys-1042. Residues Arg-909, Arg-914, and Arg-915 each carry the omega-N-methylarginine modification. Asn-1024 and Asn-1068 each carry an N-linked (GlcNAc...) asparagine glycan. Disulfide bonds link Cys-1091-Cys-1140 and Cys-1182-Cys-1225. A glycan (N-linked (GlcNAc...) asparagine) is linked at Asn-1264. Residues 1265–1293 (ASLPCPAQGTPKPRITWRRGPSSEPLNGR) form a disordered region. Cysteines 1269 and 1319 form a disulfide. Asn-1350 carries N-linked (GlcNAc...) asparagine glycosylation. Intrachain disulfides connect Cys-1363-Cys-1421 and Cys-1465-Cys-1515. Asn-1542 is a glycosylation site (N-linked (GlcNAc...) asparagine). 4 disulfide bridges follow: Cys-1559-Cys-1608, Cys-1653-Cys-1701, Cys-1745-Cys-1794, and Cys-1846-Cys-1899. N-linked (GlcNAc...) asparagine glycans are attached at residues Asn-1676 and Asn-1787. N-linked (GlcNAc...) asparagine glycosylation is present at Asn-1934. Disulfide bonds link Cys-1941–Cys-1990 and Cys-2033–Cys-2084. Asn-2034, Asn-2113, and Asn-2119 each carry an N-linked (GlcNAc...) asparagine glycan. 2 disulfide bridges follow: Cys-2126-Cys-2175 and Cys-2218-Cys-2269. Residues Asn-2309, Asn-2315, Asn-2345, and Asn-2395 are each glycosylated (N-linked (GlcNAc...) asparagine). A disulfide bridge connects residues Cys-2314 and Cys-2363. Cysteines 2408 and 2457 form a disulfide. Residues Asn-2469, Asn-2502, Asn-2541, Asn-2606, and Asn-2688 are each glycosylated (N-linked (GlcNAc...) asparagine). Disulfide bonds link Cys-2501-Cys-2550 and Cys-2597-Cys-2646. Disulfide bonds link Cys-2695–Cys-2744 and Cys-2806–Cys-2855. Asn-2892 carries an N-linked (GlcNAc...) asparagine glycan. A disulfide bridge links Cys-2901 with Cys-2950. Asn-2986 is a glycosylation site (N-linked (GlcNAc...) asparagine). Disulfide bonds link Cys-2993–Cys-3042, Cys-3088–Cys-3137, Cys-3180–Cys-3229, Cys-3273–Cys-3324, and Cys-3369–Cys-3418. The N-linked (GlcNAc...) asparagine glycan is linked to Asn-3430. Intrachain disulfides connect Cys-3462–Cys-3507, Cys-3551–Cys-3593, and Cys-3637–Cys-3686. 2 N-linked (GlcNAc...) asparagine glycosylation sites follow: Asn-3560 and Asn-3575. 2 N-linked (GlcNAc...) asparagine glycosylation sites follow: Asn-3717 and Asn-3721. Cys-3728 and Cys-3777 form a disulfide bridge. The N-linked (GlcNAc...) asparagine glycan is linked to Asn-3806. 7 disulfide bridges follow: Cys-3819/Cys-3870, Cys-3912/Cys-3961, Cys-4003/Cys-4051, Cys-4093/Cys-4142, Cys-4184/Cys-4231, Cys-4274/Cys-4322, and Cys-4364/Cys-4412. The N-linked (GlcNAc...) asparagine glycan is linked to Asn-4304. The Nidogen G2 beta-barrel domain maps to 4432 to 4654 (EPRGSRGSMT…QTEENEVGCP (223 aa)). 2 N-linked (GlcNAc...) asparagine glycosylation sites follow: Asn-4455 and Asn-4601. The EGF-like 1; calcium-binding domain occupies 4668–4708 (DKDECSGGPSPCSHTCRNAPGHFSCSCPTGFSLAWDHRNCR). 11 disulfide bridges follow: Cys-4672–Cys-4683, Cys-4679–Cys-4692, Cys-4694–Cys-4707, Cys-4713–Cys-4726, Cys-4720–Cys-4735, Cys-4739–Cys-4752, Cys-4758–Cys-4771, Cys-4765–Cys-4780, Cys-4801–Cys-4812, Cys-4808–Cys-4821, and Cys-4823–Cys-4836. The EGF-like 2; calcium-binding domain maps to 4709 to 4753 (DVDECAGNTHLCQEEQRCVNLLGSYNCLASCRPGFRVTADGSNCE). One can recognise an EGF-like 3; calcium-binding domain in the interval 4754-4789 (DVDECLEQLDECHYNQLCENTPGGHHCGCPRGYRQQ). Residues 4797-4837 (DINECLQLPTPCVYQCQNLQGSYRCLCPPGQTLLRDGRTCI) form the EGF-like 4; calcium-binding domain. N-linked (GlcNAc...) asparagine glycosylation occurs at Asn-4845. The 40-residue stretch at 4904-4943 (DLDECRVRSLCQHACQNTEGSYYCLCPSGYRLLPSGKNCQ) folds into the EGF-like 5; calcium-binding domain. 3 disulfide bridges follow: Cys-4908-Cys-4918, Cys-4914-Cys-4927, and Cys-4929-Cys-4942. Asn-5035 carries an N-linked (GlcNAc...) asparagine glycan.

Post-translationally, reported to be phosphorylated; however as this position is extracellular, the in vivo relevance is unsure. As to expression, in neonatal skin, localized in the pericellular space of basal epidermal keratinocytes (at protein level). In adult skin, restricted to basal keratinocytes of hair follicles and the interfollicular epidermis. Absent from the myotendinous junction but present in skeletal muscle (at protein level). Expressed in the pericellular extracellular matrix of epithelial cells in a number of tissues including embryonic trophectoderm and adult skin and tongue. Also present in the extracellular matrix of some, but not all, blood vessels. Expressed primarily in epithelial cells in the embryonic epidermis, lung, intestine, skeletal hindlimb muscle, tongue and the muscular layers of the esophagus.

Its subcellular location is the secreted. The protein resides in the extracellular space. It is found in the extracellular matrix. The protein localises to the cleavage furrow. This is Hemicentin-2 (Hmcn2) from Mus musculus (Mouse).